The sequence spans 212 residues: Small ribosomal subunit protein uS5 (212 aa).

In terms of domain architecture, S5 DRBM spans 48–111 (LEDEVLDINM…DIAKLNIIDV (64 aa)).

The protein belongs to the universal ribosomal protein uS5 family. In terms of assembly, part of the 30S ribosomal subunit. Contacts protein S4.

In terms of biological role, with S4 and S12 plays an important role in translational accuracy. The protein is Small ribosomal subunit protein uS5 of Haloarcula marismortui (strain ATCC 43049 / DSM 3752 / JCM 8966 / VKM B-1809) (Halobacterium marismortui).